The primary structure comprises 681 residues: Potassium-transporting ATPase ATP-binding subunit (681 aa).

Helical transmembrane passes span 30–50 (LLVYVGAILATSLYFLGFFGI), 59–79 (LAIALILWFTVLFANFAEAIA), 216–236 (ILLVTLSIIFLAVSATLLPFT), and 255–275 (IALLVCLAPTTIGALLSSIGI). Asp306 (4-aspartylphosphate intermediate) is an active-site residue. ATP is bound by residues Asp343, Glu347, 376-383 (FTATTRMS), and Lys394. The Mg(2+) site is built by Asp517 and Asp521. A run of 3 helical transmembrane segments spans residues 587–607 (FAIIPVLFYGIFPQLEALNLM), 615–635 (AILSAIIYNALIIIFLIPLSL), and 661–681 (LVAPFIAIKLIDMLLTVLGIV).

It belongs to the cation transport ATPase (P-type) (TC 3.A.3) family. Type IA subfamily. As to quaternary structure, the system is composed of three essential subunits: KdpA, KdpB and KdpC.

The protein localises to the cell membrane. The catalysed reaction is K(+)(out) + ATP + H2O = K(+)(in) + ADP + phosphate + H(+). Its function is as follows. Part of the high-affinity ATP-driven potassium transport (or Kdp) system, which catalyzes the hydrolysis of ATP coupled with the electrogenic transport of potassium into the cytoplasm. This subunit is responsible for energy coupling to the transport system and for the release of the potassium ions to the cytoplasm. This Listeria welshimeri serovar 6b (strain ATCC 35897 / DSM 20650 / CCUG 15529 / CIP 8149 / NCTC 11857 / SLCC 5334 / V8) protein is Potassium-transporting ATPase ATP-binding subunit.